Reading from the N-terminus, the 148-residue chain is Helix-loop-helix protein 14 (148 aa).

Disordered stretches follow at residues 1–21 (MAKK…HQVN), 63–83 (DPQQ…NSNN), and 112–132 (GDVS…SYSP). Positions 4 to 17 (KNQVARNERERKRV) are basic motif. In terms of domain architecture, bHLH spans 4-56 (KNQVARNERERKRVHQVNHGFDVLRNRLQPKNHTKKWSKADTLREAVKYIQQL). The segment at 18 to 56 (HQVNHGFDVLRNRLQPKNHTKKWSKADTLREAVKYIQQL) is helix-loop-helix motif. Residues 63 to 78 (DPQQPSVSSSTPDYTM) show a composition bias toward polar residues. Low complexity predominate over residues 120–132 (SPTSSVSSSSYSP).

It is found in the nucleus. In terms of biological role, probable transcription factor, involved in determining neuroblast cell fate, morphogenesis and aspects of terminal differentiation in both left/right symmetric and asymmetric neuronal lineages. In Caenorhabditis elegans, this protein is Helix-loop-helix protein 14.